Here is a 406-residue protein sequence, read N- to C-terminus: Cysteine desulfurase (406 aa).

An N6-(pyridoxal phosphate)lysine modification is found at Lys226. Cys364 acts as the Cysteine persulfide intermediate in catalysis.

Belongs to the class-V pyridoxal-phosphate-dependent aminotransferase family. Csd subfamily. As to quaternary structure, homodimer. Interacts with SufE and the SufBCD complex composed of SufB, SufC and SufD. The interaction with SufE is required to mediate the direct transfer of the sulfur atom from the S-sulfanylcysteine. The cofactor is pyridoxal 5'-phosphate.

Its subcellular location is the cytoplasm. The catalysed reaction is (sulfur carrier)-H + L-cysteine = (sulfur carrier)-SH + L-alanine. It carries out the reaction L-selenocysteine + AH2 = hydrogenselenide + L-alanine + A + H(+). It participates in cofactor biosynthesis; iron-sulfur cluster biosynthesis. Its function is as follows. Cysteine desulfurases mobilize the sulfur from L-cysteine to yield L-alanine, an essential step in sulfur metabolism for biosynthesis of a variety of sulfur-containing biomolecules. Component of the suf operon, which is activated and required under specific conditions such as oxidative stress and iron limitation. Acts as a potent selenocysteine lyase in vitro, that mobilizes selenium from L-selenocysteine. Selenocysteine lyase activity is however unsure in vivo. This is Cysteine desulfurase from Escherichia coli O157:H7 (strain EC4115 / EHEC).